Consider the following 101-residue polypeptide: MNKSKRLFPKSKRSFRRRLPPIQSGDRIDYRNMSLISRFISEQGKILSRRVNRVTLKQQRLITSAIKQARILSLLPFINNQKQFERSESTPRTTSLRTRKK.

Belongs to the bacterial ribosomal protein bS18 family. In terms of assembly, part of the 30S ribosomal subunit.

The protein resides in the plastid. The protein localises to the chloroplast. This is Small ribosomal subunit protein bS18c from Aethionema grandiflorum (Persian stone-cress).